Reading from the N-terminus, the 1075-residue chain is Protein nervous wreck (1075 aa).

One can recognise an F-BAR domain in the interval valine 11 to asparagine 289. 2 disordered regions span residues leucine 361 to lysine 381 and serine 431 to isoleucine 536. The segment covering serine 431–phenylalanine 453 has biased composition (polar residues). Residues proline 469–serine 482 are compositionally biased toward basic and acidic residues. Residues serine 493 to alanine 512 show a composition bias toward low complexity. SH3 domains lie at glutamate 542 to glutamate 603 and serine 658 to glutamate 721. Disordered regions lie at residues methionine 722–alanine 747, serine 769–alanine 837, and glycine 864–alanine 917. Pro residues-rich tracts occupy residues serine 733–alanine 747 and glutamine 809–glutamine 818. Residues leucine 819–alanine 837 show a composition bias toward low complexity. Basic and acidic residues predominate over residues valine 883–isoleucine 897.

Homodimer. Interacts (via SH3 domain 1) with WASp. Interacts (via SH3 domain 1) with shi/dynamin. Interacts (via SH3 domain 2) with Dap160. Interacts (via F-BAR domain) with SH3PX1. Interacts (via SH3 domain 2) with Snx16. Identified in a complex with Syn and Syt1. In terms of tissue distribution, detected in larval body wall muscle. Detected at the neuromuscular junction, on motoneuron axons and axon terminals, at synaptic boutons in the periactive zone surrounding the synapse (at protein level). Detected on motoneuron axons and axon terminals, at synaptic boutons in the periactive zone surrounding the synapse.

It localises to the endomembrane system. The protein localises to the synapse. It is found in the cell projection. The protein resides in the axon. Its subcellular location is the presynaptic cell membrane. It localises to the cytoplasmic vesicle. The protein localises to the secretory vesicle. It is found in the synaptic vesicle. The protein resides in the recycling endosome. Functionally, adapter protein that provides a link between vesicular membrane traffic and the actin assembly machinery. Acts together with Cdc42 to stimulate actin nucleation mediated by WASp and the ARP2/3 complex. Binds to membranes enriched in phosphatidylinositol 4,5-bisphosphate and causes local membrane deformation. Required for normal structure and function of synapses at the neuromuscular junction. Plays a role in synaptic vesicle trafficking. Required for the release of a normal number of synaptic vesicles per action potential. The polypeptide is Protein nervous wreck (Drosophila melanogaster (Fruit fly)).